We begin with the raw amino-acid sequence, 468 residues long: Citrate synthase, mitochondrial (468 aa).

The N-terminal 30 residues, 1 to 30 (MSLITAGRLCARILGAKNSPCALIAARQAS), are a transit peptide targeting the mitochondrion. Catalysis depends on residues His303 and His349. Arg358 is a binding site for oxaloacetate. Residue Asp404 is part of the active site. Oxaloacetate contacts are provided by Arg430 and Arg450.

This sequence belongs to the citrate synthase family. Homodimer.

The protein resides in the mitochondrion matrix. It carries out the reaction oxaloacetate + acetyl-CoA + H2O = citrate + CoA + H(+). The protein operates within carbohydrate metabolism; tricarboxylic acid cycle; isocitrate from oxaloacetate: step 1/2. Its function is as follows. Key enzyme of the Krebs tricarboxylic acid cycle which catalyzes the synthesis of citrate from acetyl coenzyme A and oxaloacetate. This is Citrate synthase, mitochondrial (cs) from Xenopus tropicalis (Western clawed frog).